Reading from the N-terminus, the 802-residue chain is Bifunctional purine biosynthetic protein ADE5,7 (802 aa).

The segment at 1–444 (MPEITAFPQP…FRRDIAYRAL (444 aa)) is GARS. In terms of domain architecture, ATP-grasp spans 126 to 339 (KEFMARHNIP…LAEVLLACVE (214 aa)). 157 to 218 (KPFTSGRSVI…EEYLSGPEIS (62 aa)) is a binding site for ATP. The Mg(2+) site is built by Glu307 and Asn309. Residues 455 to 788 (LTYAAAGVSV…EAWVIGEVQE (334 aa)) are AIRS.

In the N-terminal section; belongs to the GARS family. It in the C-terminal section; belongs to the AIR synthase family. Homodimer. It depends on Mg(2+) as a cofactor. Mn(2+) serves as cofactor.

The protein resides in the cytoplasm. It is found in the cytosol. It carries out the reaction 2-formamido-N(1)-(5-O-phospho-beta-D-ribosyl)acetamidine + ATP = 5-amino-1-(5-phospho-beta-D-ribosyl)imidazole + ADP + phosphate + H(+). It catalyses the reaction 5-phospho-beta-D-ribosylamine + glycine + ATP = N(1)-(5-phospho-beta-D-ribosyl)glycinamide + ADP + phosphate + H(+). It participates in purine metabolism; IMP biosynthesis via de novo pathway; 5-amino-1-(5-phospho-D-ribosyl)imidazole from N(2)-formyl-N(1)-(5-phospho-D-ribosyl)glycinamide: step 2/2. The protein operates within purine metabolism; IMP biosynthesis via de novo pathway; N(1)-(5-phospho-D-ribosyl)glycinamide from 5-phospho-alpha-D-ribose 1-diphosphate: step 2/2. Catalyzes the second and fifth step in the 'de novo' purine biosynthesis pathway; contains phosphoribosylamine--glycine ligase (GARS) and phosphoribosylformylglycinamidine cyclo-ligase (AIRS) activities. In Cryptococcus neoformans var. grubii serotype A (strain H99 / ATCC 208821 / CBS 10515 / FGSC 9487) (Filobasidiella neoformans var. grubii), this protein is Bifunctional purine biosynthetic protein ADE5,7.